We begin with the raw amino-acid sequence, 331 residues long: Ketol-acid reductoisomerase (NADP(+)) (331 aa).

The 181-residue stretch at 2–182 folds into the KARI N-terminal Rossmann domain; sequence ARMYYDEDAN…GGTRGGVLET (181 aa). NADP(+)-binding positions include 25-28, serine 51, serine 53, and 83-86; these read YGSQ and DEVQ. Histidine 108 is a catalytic residue. Glycine 134 contributes to the NADP(+) binding site. Residues 183–328 form the KARI C-terminal knotted domain; it reads TFREETETDL…KDLRAMFSWL (146 aa). Mg(2+) contacts are provided by aspartate 191, glutamate 195, glutamate 227, and glutamate 231. Serine 252 is a substrate binding site.

Belongs to the ketol-acid reductoisomerase family. The cofactor is Mg(2+).

The catalysed reaction is (2R)-2,3-dihydroxy-3-methylbutanoate + NADP(+) = (2S)-2-acetolactate + NADPH + H(+). The enzyme catalyses (2R,3R)-2,3-dihydroxy-3-methylpentanoate + NADP(+) = (S)-2-ethyl-2-hydroxy-3-oxobutanoate + NADPH + H(+). The protein operates within amino-acid biosynthesis; L-isoleucine biosynthesis; L-isoleucine from 2-oxobutanoate: step 2/4. Its pathway is amino-acid biosynthesis; L-valine biosynthesis; L-valine from pyruvate: step 2/4. Its function is as follows. Involved in the biosynthesis of branched-chain amino acids (BCAA). Catalyzes an alkyl-migration followed by a ketol-acid reduction of (S)-2-acetolactate (S2AL) to yield (R)-2,3-dihydroxy-isovalerate. In the isomerase reaction, S2AL is rearranged via a Mg-dependent methyl migration to produce 3-hydroxy-3-methyl-2-ketobutyrate (HMKB). In the reductase reaction, this 2-ketoacid undergoes a metal-dependent reduction by NADPH to yield (R)-2,3-dihydroxy-isovalerate. The chain is Ketol-acid reductoisomerase (NADP(+)) from Nostoc sp. (strain PCC 7120 / SAG 25.82 / UTEX 2576).